A 682-amino-acid polypeptide reads, in one-letter code: Penicillin-binding protein activator LpoA (682 aa).

Positions 1–26 (MLSSITVRTKSGRLIPLVLAATLLAA) are cleaved as a signal peptide. Cys-27 carries N-palmitoyl cysteine lipidation. Cys-27 carries the S-diacylglycerol cysteine lipid modification.

The protein belongs to the LpoA family. Interacts with PBP1a.

The protein resides in the cell outer membrane. Regulator of peptidoglycan synthesis that is essential for the function of penicillin-binding protein 1A (PBP1a). The chain is Penicillin-binding protein activator LpoA from Edwardsiella ictaluri (strain 93-146).